Consider the following 499-residue polypeptide: Putative sodium-dependent excitatory amino acid transporter glt-4 (499 aa).

Residues 1–7 lie on the Cytoplasmic side of the membrane; that stretch reads MAKLSKE. Transmembrane regions (helical) follow at residues 8 to 28, 50 to 70, and 87 to 107; these read NLLL…GFSL, FVQM…ITSL, and IYYT…VSVI. N-linked (GlcNAc...) asparagine glycosylation is present at Asn165. The next 3 helical transmembrane spans lie at 194-217, 227-254, and 276-297; these read VSDG…IGVI, FFKS…TFLI, and ITVI…CVVL. An intramembrane region (discontinuously helical) is located at residues 303–333; the sequence is IKFVGGMAQALLTALATSSSSATLPLSIKCC. 320–322 contacts L-aspartate; the sequence is SSS. Residues 343–369 traverse the membrane as a helical segment; sequence VTRFVLPLGATINMDGTALYEAVAAIY. Residues Gly351, Thr353, and Asn355 each coordinate Na(+). L-aspartate contacts are provided by residues Thr359, 400–404, Asp433, and Asn440; that span reads IPQAG. Positions 383-416 form an intramembrane region, discontinuously helical; that stretch reads VVLVSLTATLASIGAAGIPQAGIVTMIMVLIAIG. Residues 430-451 form a helical membrane-spanning segment; that stretch reads FMLDRLRTTVNVHGDSIATAVI. 2 residues coordinate Na(+): Asn440 and Asp444.

This sequence belongs to the dicarboxylate/amino acid:cation symporter (DAACS) (TC 2.A.23) family.

The protein localises to the cell membrane. Its function is as follows. Sodium-dependent, high-affinity amino acid transporter that mediates the uptake of L-glutamate and also L-aspartate and D-aspartate. Functions as a symporter that transports one amino acid molecule together with two or three Na(+) ions and one proton, in parallel with the counter-transport of one K(+) ion. Mediates Cl(-) flux that is not coupled to amino acid transport; this avoids the accumulation of negative charges due to aspartate and Na(+) symport. In Caenorhabditis elegans, this protein is Putative sodium-dependent excitatory amino acid transporter glt-4 (glt-4).